A 237-amino-acid chain; its full sequence is Large ribosomal subunit protein uL1 (237 aa).

This sequence belongs to the universal ribosomal protein uL1 family. As to quaternary structure, part of the 50S ribosomal subunit.

Binds directly to 23S rRNA. The L1 stalk is quite mobile in the ribosome, and is involved in E site tRNA release. Its function is as follows. Protein L1 is also a translational repressor protein, it controls the translation of the L11 operon by binding to its mRNA. This is Large ribosomal subunit protein uL1 from Dehalococcoides mccartyi (strain ATCC BAA-2100 / JCM 16839 / KCTC 5957 / BAV1).